The primary structure comprises 362 residues: DNA polymerase IV (362 aa).

In terms of domain architecture, UmuC spans 6–187 (IIHVDMDAFY…LPVSSFHGVG (182 aa)). 2 residues coordinate Mg(2+): aspartate 10 and aspartate 105. Glutamate 106 is a catalytic residue.

This sequence belongs to the DNA polymerase type-Y family. As to quaternary structure, monomer. The cofactor is Mg(2+).

The protein resides in the cytoplasm. The catalysed reaction is DNA(n) + a 2'-deoxyribonucleoside 5'-triphosphate = DNA(n+1) + diphosphate. In terms of biological role, poorly processive, error-prone DNA polymerase involved in untargeted mutagenesis. Copies undamaged DNA at stalled replication forks, which arise in vivo from mismatched or misaligned primer ends. These misaligned primers can be extended by PolIV. Exhibits no 3'-5' exonuclease (proofreading) activity. May be involved in translesional synthesis, in conjunction with the beta clamp from PolIII. This is DNA polymerase IV from Leptospira interrogans serogroup Icterohaemorrhagiae serovar copenhageni (strain Fiocruz L1-130).